The chain runs to 691 residues: Elongation factor G (691 aa).

Residues 8–282 enclose the tr-type G domain; sequence DRVRNIGIAA…AVVDYLPAPI (275 aa). GTP contacts are provided by residues 17–24, 81–85, and 135–138; these read AHIDAGKT, DTPGH, and NKMD.

The protein belongs to the TRAFAC class translation factor GTPase superfamily. Classic translation factor GTPase family. EF-G/EF-2 subfamily.

Its subcellular location is the cytoplasm. In terms of biological role, catalyzes the GTP-dependent ribosomal translocation step during translation elongation. During this step, the ribosome changes from the pre-translocational (PRE) to the post-translocational (POST) state as the newly formed A-site-bound peptidyl-tRNA and P-site-bound deacylated tRNA move to the P and E sites, respectively. Catalyzes the coordinated movement of the two tRNA molecules, the mRNA and conformational changes in the ribosome. This is Elongation factor G from Synechococcus sp. (strain RCC307).